The sequence spans 464 residues: 3-isopropylmalate dehydratase large subunit (464 aa).

C337, C397, and C400 together coordinate [4Fe-4S] cluster.

This sequence belongs to the aconitase/IPM isomerase family. LeuC type 1 subfamily. Heterodimer of LeuC and LeuD. The cofactor is [4Fe-4S] cluster.

It catalyses the reaction (2R,3S)-3-isopropylmalate = (2S)-2-isopropylmalate. Its pathway is amino-acid biosynthesis; L-leucine biosynthesis; L-leucine from 3-methyl-2-oxobutanoate: step 2/4. In terms of biological role, catalyzes the isomerization between 2-isopropylmalate and 3-isopropylmalate, via the formation of 2-isopropylmaleate. In Bacillus anthracis (strain A0248), this protein is 3-isopropylmalate dehydratase large subunit.